The chain runs to 220 residues: Coat protein (220 aa).

Belongs to the potexvirus capsid protein family.

Its subcellular location is the virion. In terms of biological role, required for genome encapsidation. Forms ribonucleoprotein complexes along with TGB1 helicase and viral RNA. This is Coat protein from Cattleya (Nun's hood orchid).